The primary structure comprises 376 residues: CYP enzymes assisting alcohol dehydrogenase (376 aa).

Zn(2+) contacts are provided by Cys43, Thr45, His64, Cys94, Cys97, Cys100, Cys108, and Cys173. Residue Thr45 participates in NAD(+) binding. Residues Thr45 and His64 each contribute to the substrate site. NAD(+) contacts are provided by residues 199–204, Asp223, Lys228, 294–296, Phe320, and Lys371; these read GLGAVG and LGA.

This sequence belongs to the zinc-containing alcohol dehydrogenase family. Class-III subfamily. Homodimer. Zn(2+) is required as a cofactor.

The protein operates within alkaloid biosynthesis. Its function is as follows. May be a positive catalyzer of strictosidine production by assisting secologanin biosynthesis, thus being involved in monoterpene indole alkaloids accumulation. The polypeptide is CYP enzymes assisting alcohol dehydrogenase (Catharanthus roseus (Madagascar periwinkle)).